The primary structure comprises 597 residues: Sodium/mannose cotransporter SLC5A10 (597 aa).

Residues 1–16 (MAVDNSTSDAHTPGRQ) lie on the Extracellular side of the membrane. An N-linked (GlcNAc...) asparagine glycan is attached at N5. A helical transmembrane segment spans residues 17–37 (LTVVDIAIIAVYFALNVAVGI). At 38–73 (WSSCRASRNTVRGYFLAGRDMTWWPIGASLFASSEG) the chain is on the cytoplasmic side. The helical transmembrane segment at 74–94 (SGLFIGLAGSGAAGGLAVAGF) threads the bilayer. At 95 to 100 (EWNATY) the chain is on the extracellular side. An N-linked (GlcNAc...) asparagine glycan is attached at N97. A helical transmembrane segment spans residues 101 to 121 (VLLALAWVFVPIYLSSEIVTM). Over 122–139 (PEYMQKRYGGQRIRMYLS) the chain is Cytoplasmic. A helical membrane pass occupies residues 140–162 (VLSLLLSVFTKISIDLYAGALFV). Topologically, residues 163–174 (HICLGWNFYLST) are extracellular. A helical membrane pass occupies residues 175-195 (VIMLAITALYTIAGGLTAVIY). The Cytoplasmic segment spans residues 196-201 (TDALQT). A helical membrane pass occupies residues 202-222 (LVMVAGAVILTIKAFEQIGGY). The Extracellular segment spans residues 223-265 (EQLAEAYAQAVPSRTISNTTCHVPRADAMHMFRDPYTADLPWT). Residues 266 to 286 (GMTFGLTIMAAWYWCTDQVIV) form a helical membrane-spanning segment. Residues 287–301 (QRSLSARDLNHAKGG) lie on the Cytoplasmic side of the membrane. A helical membrane pass occupies residues 302 to 322 (SILASYLKMLPMGLMVMPGMI). The Extracellular portion of the chain corresponds to 323 to 367 (SRVLFPDDVGCVVPAECLRACGAEIGCSNIAYPKLVMELMPTGLR). A helical membrane pass occupies residues 368–388 (GLMVAVMMAALMSSLTSIFNS). The Cytoplasmic portion of the chain corresponds to 389–410 (SSTLFTMDIWRRLRPRAGEREL). Residues 411-431 (LLVGRLVIVVLVGVSVAWIPV) traverse the membrane as a helical segment. At 432–444 (LQGSNGGQLFIYM) the chain is on the extracellular side. The helical transmembrane segment at 445–465 (QSVTSSLAPPVTAVFVLGIFW) threads the bilayer. Residues 466–472 (RRANEQG) are Cytoplasmic-facing. The chain crosses the membrane as a helical span at residues 473-493 (AFWGLMAGLAVGATRLVLEFL). Residues 494–514 (HPAPPCGHPDTRPPILHGVHY) lie on the Extracellular side of the membrane. A helical transmembrane segment spans residues 515 to 535 (LHFAVALFLLSGAVVVAGSLL). The Cytoplasmic portion of the chain corresponds to 536-576 (TPHPQGVQIQSLTWWTLAQDLPLGVKTGDGRASQRHAFWAR). Residues 577 to 597 (VCGVNAILLMCVNIFFYTYFA) traverse the membrane as a helical segment.

It belongs to the sodium:solute symporter (SSF) (TC 2.A.21) family. Predominantyl expressed in kidney. Also detected at very low levels in testes, skeletal muscle, and spleen.

It localises to the apical cell membrane. The enzyme catalyses D-mannose(out) + Na(+)(out) = D-mannose(in) + Na(+)(in). It catalyses the reaction D-fructopyranose(out) + Na(+)(out) = D-fructopyranose(in) + Na(+)(in). In terms of biological role, electrogenic Na+-coupled sugar symporter that actively transports D-mannose or D-fructose at the plasma membrane, with a Na+ to sugar coupling ratio of 1:1. Transporter activity is driven by a transmembrane Na+ electrochemical gradient set by the Na+/K+ pump. Exclusively recognizes sugar substrates having a pyranose ring with an axial hydroxyl group on carbon 2. Has likely evolved to enable renal reabsorption of D-mannose, an important constituent of oligosaccharide chains of glycoproteins. Contributes to dietary D-fructose reabsorption from glomerular filtrate across the brush border of the kidney. The chain is Sodium/mannose cotransporter SLC5A10 (SLC5A10) from Bos taurus (Bovine).